Reading from the N-terminus, the 2082-residue chain is Probable ATP-dependent helicase PF08_0048 (2082 aa).

One can recognise an HSA domain in the interval 66–138; it reads KIVEPAKTPE…EEKRLKLYSK (73 aa). Low complexity predominate over residues 209-221; it reads NNSEIVNNNASSV. Disordered stretches follow at residues 209–234 and 301–470; these read NNSE…DDLT and NVIE…SPTR. Composition is skewed to basic and acidic residues over residues 419-448 and 455-465; these read NSDH…HIDN and TGEDYKSDKEN. A coiled-coil region spans residues 476-531; it reads KKEKYDEYDTKLKIEKREEENKNYEKDEHEYESDNYDKEKINKKKELILLKNDIEN. The tract at residues 532–641 is disordered; it reads DSDETSEHIK…KNDSDDNDDI (110 aa). Positions 536–545 are enriched in basic and acidic residues; it reads TSEHIKRDSR. The span at 579 to 598 shows a compositional bias: low complexity; it reads DNNNSENDNNNDNNNDNNND. Positions 599–627 are enriched in acidic residues; the sequence is NNDDNNDDNNDDNNDDNNDDNNDDNNDDN. Positions 674–839 constitute a Helicase ATP-binding domain; it reads LYLYKNNING…WSLLHFLMPN (166 aa). ATP is bound at residue 687–694; that stretch reads DEMGLGKT. A DEAH box motif is present at residues 790–793; it reads DEAH. A disordered region spans residues 1199–1255; the sequence is EQNNNNSKDNNNNIDNNNNIDNNNNIDNNNNIDNNNNIDNNNNNIDNNNNIDNHHNN. The region spanning 1772 to 1922 is the Helicase C-terminal domain; the sequence is ALEKLLSKCK…NICINMGNFN (151 aa). Positions 1972–2060 form a coiled coil; the sequence is EQVENKDKMN…DEMRMKIEIE (89 aa).

Belongs to the SNF2/RAD54 helicase family. SWR1 subfamily. Component of a chromatin-remodeling complex.

It is found in the nucleus. Its function is as follows. Catalytic component of a chromatin remodeling complex. The chain is Probable ATP-dependent helicase PF08_0048 from Plasmodium falciparum (isolate 3D7).